The sequence spans 173 residues: RNA pyrophosphohydrolase (173 aa).

A Nudix hydrolase domain is found at 6–149 (GFRANVGIIL…KRGVYRRALR (144 aa)). The Nudix box signature appears at 38–59 (GGIDEGETPLDAMYRELWEEVG).

This sequence belongs to the Nudix hydrolase family. RppH subfamily. The cofactor is a divalent metal cation.

Its function is as follows. Accelerates the degradation of transcripts by removing pyrophosphate from the 5'-end of triphosphorylated RNA, leading to a more labile monophosphorylated state that can stimulate subsequent ribonuclease cleavage. In Psychrobacter sp. (strain PRwf-1), this protein is RNA pyrophosphohydrolase.